We begin with the raw amino-acid sequence, 193 residues long: Probable 3' cyclic ADP-D-ribose synthase ThsB' (193 aa).

In terms of assembly, homodimer.

The enzyme catalyses NAD(+) = 3'cADPR + nicotinamide + H(+). TIR-like domain-containing component of the Thoeris antiviral defense system, composed of ThsA and ThsB and ThsB'. In the presence of NAD(+) produces a signaling molecule that activates cognate ThsA (AC J8G6Z1) to hydrolyze NAD(+). The signaling molecule is a cyclic ADP-D-ribose isomer and may be 3' cyclic ADP-D-ribose (3'cADPR); it is not 2'cADPR. In Bacillus cereus (strain MSX-D12), this protein is Probable 3' cyclic ADP-D-ribose synthase ThsB'.